The following is a 434-amino-acid chain: MSILKIQAREIFDSRGNPTIEVDLYTKKGLFRAAVPSGASTGIYEALELRDNDKTRFLGKGVSKAVEHVNKTIAPALVNKNVSVVEQEKIDKLMIEMDGSENKSKFGANAILGVSLAVCKAGAAEKDIPLYRHIADLAGNKEVILPVPAFNVINGGSHAGNKLAMQEFMILPIGAECFKEAMRIGAEVYHNLKNVIKEKYGKDATNVGDEGGFAPNILENKEALELLKTAISKAGYADKIVIGMDVAASEFYRDGKYDLDFKSPDDRSRYITPDQLADLYKGFVKNYPVVSIEDPFDQDDWPAWKKFTAESGIQVVGDDLTVTNPKRIAKAVQEKSCNCLLLKVNQIGSVTESLQACKLAQSNGWGVMVSHRSGETEDTFIADLVVGLCTGQIKTGAPCRSERLAKYNQLLRIEEELGSKARFAGRNFRNPRVN.

Position 40 (Ser-40) interacts with Mg(2+). His-158 and Glu-167 together coordinate substrate. The active-site Proton donor is the Glu-210. 3 residues coordinate Mg(2+): Asp-245, Glu-293, and Asp-318. 2 residues coordinate substrate: Glu-293 and Asp-318. Catalysis depends on Lys-343, which acts as the Proton acceptor. Residues 370 to 373 (SHRS) and Lys-394 each bind substrate.

This sequence belongs to the enolase family. Homodimer. Mg(2+) serves as cofactor.

It localises to the cytoplasm. The enzyme catalyses (2R)-2-phosphoglycerate = phosphoenolpyruvate + H2O. Its pathway is carbohydrate degradation; glycolysis; pyruvate from D-glyceraldehyde 3-phosphate: step 4/5. The sequence is that of Alpha-enolase from Python regius (Ball python).